Consider the following 412-residue polypeptide: Hyaluronidase-3 (412 aa).

Positions 1 to 22 are cleaved as a signal peptide; that stretch reads MIMHLGLMMVVGLTLCLMHGQA. Intrachain disulfides connect C42–C332, C206–C221, C357–C368, C362–C396, and C398–C407. The N-linked (GlcNAc...) asparagine glycan is linked to N69. The Proton donor role is filled by E129. N-linked (GlcNAc...) asparagine glycosylation is present at N216. Residues 353–408 enclose the EGF-like domain; sequence AAMACSHQRCHGHGRCARKDPGQMEAFLHLQPDDSLGAWNSFRCHCYSGWAGPTCL.

This sequence belongs to the glycosyl hydrolase 56 family. N-glycosylated. Expressed in testis, epididymal tissue, epididymal luminal fluid (ELF), acrosome-intact (AI) sperm and caput (CAP), corpus (COR) and caudal (CAU) sperm. Higher expression in sperm than testis (at protein level). Liver, kidney, skin, brain, stomach and testis. Expressed mainly in granulosa cells of the ovaries. Expressed in small and large antral follicles. Not present in theca or stroma cells. Expressed in testis and liver. Expressed in testis and CAP, COR, and CAU epididymis tissue.

The protein localises to the secreted. It is found in the cell membrane. Its subcellular location is the cytoplasmic vesicle. It localises to the secretory vesicle. The protein resides in the acrosome. The protein localises to the endoplasmic reticulum. It is found in the early endosome. The enzyme catalyses Random hydrolysis of (1-&gt;4)-linkages between N-acetyl-beta-D-glucosamine and D-glucuronate residues in hyaluronate.. Its function is as follows. Facilitates sperm penetration into the layer of cumulus cells surrounding the egg by digesting hyaluronic acid. Involved in induction of the acrosome reaction in the sperm. Involved in follicular atresia, the breakdown of immature ovarian follicles that are not selected to ovulate. Induces ovarian granulosa cell apoptosis, possibly via apoptotic signaling pathway involving CASP8 and CASP3 activation, and poly(ADP-ribose) polymerase (PARP) cleavage. Has no hyaluronidase activity in embryonic fibroblasts in vitro. Has no hyaluronidase activity in granulosa cells in vitro. The sequence is that of Hyaluronidase-3 (Hyal3) from Mus musculus (Mouse).